Reading from the N-terminus, the 209-residue chain is Probable nicotinate-nucleotide adenylyltransferase (209 aa).

Belongs to the NadD family.

The catalysed reaction is nicotinate beta-D-ribonucleotide + ATP + H(+) = deamido-NAD(+) + diphosphate. It participates in cofactor biosynthesis; NAD(+) biosynthesis; deamido-NAD(+) from nicotinate D-ribonucleotide: step 1/1. Functionally, catalyzes the reversible adenylation of nicotinate mononucleotide (NaMN) to nicotinic acid adenine dinucleotide (NaAD). The polypeptide is Probable nicotinate-nucleotide adenylyltransferase (Idiomarina loihiensis (strain ATCC BAA-735 / DSM 15497 / L2-TR)).